We begin with the raw amino-acid sequence, 292 residues long: Small ribosomal subunit protein uS9m (292 aa).

Residues 273–292 form a disordered region; it reads VERKKPGKRKARKMPTWVKR.

The protein belongs to the universal ribosomal protein uS9 family.

It is found in the mitochondrion. This chain is Small ribosomal subunit protein uS9m (MRPS9), found in Kluyveromyces marxianus (Yeast).